Reading from the N-terminus, the 691-residue chain is MNKNPQRFTITAALPYTNGPIHIGHLAGVYVPADIYSRFLRMQGYDVAFVCGSDEHGVPITIKAKKEGVTPQDVVDKYNGIIKKSFEDFGITFDNYSRTSGKTHHDTASAFFKKMYEDGKFIEESTEQLYDEEAGQFLADRFVTGTCPKCGNEEAYGDQCESCGTSLNATDLINPKSAITGAVPTLKETRHWFLPLDQYEDFLKEWILKGHKSDWKSNVYGQVKSWIDDGLRARAVTRDLDWGIPVPVEGGDGKVLYVWFDAPIGYISSTKEWAEREGKDWEPYWKDENTKLVHFIGKDNIVFHCIIFPVMLKAHGDYILPENVPANEFLNLEGKKLSTSKNWAVWLHEYLEEFPDQQDVLRYVLTANAPETKDNDFTWKDFQARNNNELVAIFGNFINRVVVLTNKYYNGIVPEPGAYSEIDEKTIAELKAYPSVIASSIERYRFREAQGELMNLARLGNKYLADEEPWKLIKTDEERVKTIMYVALQIASALSIISEPFLPFTSAKLKKMLNHVDESSDNTPDWDIIGTKEALILGGHQIGKAELLFSKIEDEQMEKQLEKLEATKTANAMEDQKAEPQKEIATFEDFTKMDLRVGTIIEAQKMPKTKKLMVLKVDTGIDQRTVVSGIAEHFKAEDIIGKKVTVLANLAPRKLRGVDSEGMILMTENAEGKLVFVNPDEDGVKAGTTIN.

The 'HIGH' region motif lies at 15–25; sequence PYTNGPIHIGH. Zn(2+) is bound by residues cysteine 147, cysteine 150, cysteine 160, and cysteine 163. A 'KMSKS' region motif is present at residues 336–340; it reads KLSTS. Position 339 (threonine 339) interacts with ATP. Residues 589–691 enclose the tRNA-binding domain; that stretch reads DFTKMDLRVG…DGVKAGTTIN (103 aa).

This sequence belongs to the class-I aminoacyl-tRNA synthetase family. MetG type 1 subfamily. Homodimer. Zn(2+) is required as a cofactor.

The protein resides in the cytoplasm. It catalyses the reaction tRNA(Met) + L-methionine + ATP = L-methionyl-tRNA(Met) + AMP + diphosphate. Its function is as follows. Is required not only for elongation of protein synthesis but also for the initiation of all mRNA translation through initiator tRNA(fMet) aminoacylation. The chain is Methionine--tRNA ligase from Christiangramia forsetii (strain DSM 17595 / CGMCC 1.15422 / KT0803) (Gramella forsetii).